Consider the following 2193-residue polypeptide: ATP-dependent helicase BRM (2193 aa).

An N-acetylmethionine modification is found at methionine 1. Gly residues predominate over residues 1–10; that stretch reads MQSGGSGGGP. 5 disordered regions span residues 1–126, 175–231, 293–466, 511–558, and 580–649; these read MQSG…QEGQ, MQDL…PGNM, QKAG…GFTK, SPAI…DNVG, and TSTD…ASAR. Residues 23-62 are compositionally biased toward low complexity; that stretch reads ASTSSAASPSSSSSSVQQQQQQQQQQQQQQQLASRQQQQQ. Residues 38-58 adopt a coiled-coil conformation; sequence VQQQQQQQQQQQQQQQLASRQ. Over residues 79–88 the composition is skewed to gly residues; the sequence is GVQGMMGGGN. Low complexity-rich tracts occupy residues 91–102, 110–126, and 180–192; these read SSPGSMQMPQQS, QQQQ…QEGQ, and PSSQ…SKPS. Residues 204–223 are compositionally biased toward polar residues; that stretch reads ESSSQQRNETKSHPQQQVGT. Low complexity predominate over residues 301-320; that stretch reads ASQSPSIPISSQPASSSVVP. Composition is skewed to polar residues over residues 325–339, 347–358, 383–412, and 421–433; these read PHAN…QSGS, STGSFASTSSPR, QPTN…STKK, and QMQQ…TPTP. Residues 445 to 463 are compositionally biased toward low complexity; sequence SNSSLQSGQGTQQAQQRSG. In terms of domain architecture, QLQ spans 463-499; that stretch reads GFTKQQLHVLKAQILAFRRLKKGEGSLPPELLQAISP. Basic and acidic residues-rich tracts occupy residues 517 to 537 and 611 to 621; these read VQDR…ECGK and PRSDSTADKGK. Residues 626–638 show a composition bias toward polar residues; it reads DGSQSKVPPQANS. Residues 705–712 carry the Nuclear localization signal 1 motif; that stretch reads LKKINGLL. A coiled-coil region spans residues 726 to 795; sequence VLRLQIEEKK…QKAVREKQLK (70 aa). The Helicase ATP-binding domain occupies 993–1158; the sequence is LSLYNNKLNG…WSLLNLLLPD (166 aa). Residue 1006–1013 participates in ATP binding; it reads DEMGLGKT. The stretch at 1109 to 1129 forms a coiled coil; the sequence is DEAQRMKDRESVLARDLDRYR. One can recognise a Helicase C-terminal domain in the interval 1312-1489; the sequence is ILDRILIKLQ…QYKIDMADEV (178 aa). 2 disordered regions span residues 1583–1775 and 1789–1894; these read SKKP…DEEQ and LRPR…NAGA. Basic residues predominate over residues 1608 to 1617; it reads KRGRPKSKKI. Residues 1618 to 1638 adopt a coiled-coil conformation; the sequence is NYKEIEDDIAGYSEESSEERN. Serine 1641 carries the phosphoserine modification. Acidic residues predominate over residues 1642–1657; sequence GNEEEGDIRQFDDDEL. Basic and acidic residues predominate over residues 1821–1832; it reads TVVDSHSSRQDQ. Residues 1833–1842 are compositionally biased toward low complexity; it reads SDSSSRLRSV. 2 stretches are compositionally biased toward polar residues: residues 1848–1870 and 1882–1892; these read ASTS…QLTV and DGTSPISSSNA. Positions 1895–2005 constitute a Bromo domain; that stretch reads RMSHIIQKRC…NLFFDLLKMS (111 aa). A Nuclear localization signal 2 motif is present at residues 1901–1908; that stretch reads QKRCKIVI. A compositionally biased stretch (polar residues) spans 2022-2032; that stretch reads GSAPTLVSTPT. The tract at residues 2022–2193 is disordered; it reads GSAPTLVSTP…DSGKRRPSHL (172 aa). At serine 2137 the chain carries Phosphoserine. Residues 2149–2166 show a composition bias toward polar residues; that stretch reads LAQQQRWPNQPTHPNNSG.

This sequence belongs to the SNF2/RAD54 helicase family. Interacts with SWI3B, SWI3C, H3 and H4, but not with SWI3A, SWI3D or BSH. Interacts with LFY. Interacts with REF6. Binds to FGT1. As to expression, highly expressed in inflorescences and leaves. Low expression in siliques, roots and seedlings. Detected in shoot apical meristem, root meristem, vascular tissue of developing leaves, petals, stamens filaments, anthers and carpels.

The protein localises to the nucleus. The catalysed reaction is ATP + H2O = ADP + phosphate + H(+). In terms of biological role, ATPase subunit of a multiprotein complex equivalent of the SWI/SNF complex that acts by remodeling the chromatin by catalyzing an ATP-dependent alteration in the structure of nucleosomal DNA. Represses embryonic genes in leaves and controls shoot development and flowering. Activates flower homeotic genes. The association of BRM with its target genes requires REF6. Necessary to acquire heat stress (HS) memory, by globally binding to HS memory genes. This chain is ATP-dependent helicase BRM, found in Arabidopsis thaliana (Mouse-ear cress).